Reading from the N-terminus, the 115-residue chain is Toxin-like structure LSTX-D2 (115 aa).

An N-terminal signal peptide occupies residues 1 to 22 (MKVLVLFSVLFLTLFSYSSTEA). Positions 23–44 (IDEFDSDAEDDMLSLMANEQVR) are excised as a propeptide. Intrachain disulfides connect Cys48-Cys63, Cys55-Cys72, Cys62-Cys87, and Cys74-Cys85.

The protein belongs to the neurotoxin 19 (CSTX) family. 01 subfamily. As to expression, expressed by the venom gland.

The protein resides in the secreted. The protein is Toxin-like structure LSTX-D2 of Lycosa singoriensis (Wolf spider).